The chain runs to 704 residues: DNA ligase (704 aa).

NAD(+) contacts are provided by residues Asp-43–Asp-47, Ser-92–Leu-93, and Glu-124. The N6-AMP-lysine intermediate role is filled by Lys-126. Arg-147, Glu-182, Lys-298, and Lys-322 together coordinate NAD(+). 4 residues coordinate Zn(2+): Cys-427, Cys-430, Cys-445, and Cys-451. A BRCT domain is found at Pro-625–Ala-704.

The protein belongs to the NAD-dependent DNA ligase family. LigA subfamily. Mg(2+) serves as cofactor. It depends on Mn(2+) as a cofactor.

The catalysed reaction is NAD(+) + (deoxyribonucleotide)n-3'-hydroxyl + 5'-phospho-(deoxyribonucleotide)m = (deoxyribonucleotide)n+m + AMP + beta-nicotinamide D-nucleotide.. In terms of biological role, DNA ligase that catalyzes the formation of phosphodiester linkages between 5'-phosphoryl and 3'-hydroxyl groups in double-stranded DNA using NAD as a coenzyme and as the energy source for the reaction. It is essential for DNA replication and repair of damaged DNA. The polypeptide is DNA ligase (Cereibacter sphaeroides (strain ATCC 17029 / ATH 2.4.9) (Rhodobacter sphaeroides)).